A 250-amino-acid chain; its full sequence is UPF0758 protein tlr1707 (250 aa).

One can recognise an MPN domain in the interval 116 to 239; sequence TIIDSPALAA…YQSLREITPL (124 aa). Zn(2+)-binding residues include His188, His190, and Asp201. Positions 188-201 match the JAMM motif motif; sequence HNHPSGNLSPSQAD.

The protein belongs to the UPF0758 family.

The chain is UPF0758 protein tlr1707 from Thermosynechococcus vestitus (strain NIES-2133 / IAM M-273 / BP-1).